Here is a 41-residue protein sequence, read N- to C-terminus: Large ribosomal subunit protein bL36B (41 aa).

Belongs to the bacterial ribosomal protein bL36 family.

The chain is Large ribosomal subunit protein bL36B from Actinobacillus pleuropneumoniae serotype 5b (strain L20).